The following is a 410-amino-acid chain: Transposase for insertion sequence element IS801 (410 aa).

Belongs to the transposase 32 family.

Its function is as follows. Involved in the transposition of the insertion sequence. In Pseudomonas savastanoi pv. phaseolicola (Pseudomonas syringae pv. phaseolicola), this protein is Transposase for insertion sequence element IS801.